Here is a 201-residue protein sequence, read N- to C-terminus: Retinol-binding protein 4 (201 aa).

The N-terminal stretch at 1–18 is a signal peptide; it reads MKWVWALLLLAALGSGRA. 3 disulfide bridges follow: C22-C178, C88-C192, and C138-C147. A substrate-binding site is contributed by Q116. The residue at position 139 (R139) is an Omega-N-methylarginine.

This sequence belongs to the calycin superfamily. Lipocalin family. In terms of assembly, interacts with TTR. Interaction with TTR prevents its loss by filtration through the kidney glomeruli. Interacts with STRA6. As to expression, detected in blood plasma and in urine (at protein level).

It localises to the secreted. Its function is as follows. Retinol-binding protein that mediates retinol transport in blood plasma. Delivers retinol from the liver stores to the peripheral tissues. Transfers the bound all-trans retinol to STRA6, that then facilitates retinol transport across the cell membrane. The polypeptide is Retinol-binding protein 4 (RBP4) (Homo sapiens (Human)).